A 477-amino-acid polypeptide reads, in one-letter code: 3-isopropylmalate dehydratase large subunit (477 aa).

Positions 352, 413, and 416 each coordinate [4Fe-4S] cluster.

Belongs to the aconitase/IPM isomerase family. LeuC type 1 subfamily. As to quaternary structure, heterodimer of LeuC and LeuD. [4Fe-4S] cluster serves as cofactor.

The catalysed reaction is (2R,3S)-3-isopropylmalate = (2S)-2-isopropylmalate. It functions in the pathway amino-acid biosynthesis; L-leucine biosynthesis; L-leucine from 3-methyl-2-oxobutanoate: step 2/4. In terms of biological role, catalyzes the isomerization between 2-isopropylmalate and 3-isopropylmalate, via the formation of 2-isopropylmaleate. This is 3-isopropylmalate dehydratase large subunit from Pseudomonas entomophila (strain L48).